A 95-amino-acid chain; its full sequence is Acylphosphatase (95 aa).

Residues 6–94 (RVRVIVKGIV…EDFTGFSVRY (89 aa)) form the Acylphosphatase-like domain. Active-site residues include Arg21 and Asn39.

The protein belongs to the acylphosphatase family.

The catalysed reaction is an acyl phosphate + H2O = a carboxylate + phosphate + H(+). The sequence is that of Acylphosphatase (acyP) from Caldivirga maquilingensis (strain ATCC 700844 / DSM 13496 / JCM 10307 / IC-167).